The chain runs to 209 residues: NAD(P)H-quinone oxidoreductase subunit I (209 aa).

4Fe-4S ferredoxin-type domains are found at residues 55-84 (GRIH…VDWE) and 95-124 (KHYS…MTEE). The [4Fe-4S] cluster site is built by cysteine 64, cysteine 67, cysteine 70, cysteine 74, cysteine 104, cysteine 107, cysteine 110, and cysteine 114.

It belongs to the complex I 23 kDa subunit family. As to quaternary structure, NDH-1 is composed of at least 11 different subunits. The cofactor is [4Fe-4S] cluster.

It is found in the cellular thylakoid membrane. The catalysed reaction is a plastoquinone + NADH + (n+1) H(+)(in) = a plastoquinol + NAD(+) + n H(+)(out). The enzyme catalyses a plastoquinone + NADPH + (n+1) H(+)(in) = a plastoquinol + NADP(+) + n H(+)(out). Its function is as follows. NDH-1 shuttles electrons from an unknown electron donor, via FMN and iron-sulfur (Fe-S) centers, to quinones in the respiratory and/or the photosynthetic chain. The immediate electron acceptor for the enzyme in this species is believed to be plastoquinone. Couples the redox reaction to proton translocation, and thus conserves the redox energy in a proton gradient. The sequence is that of NAD(P)H-quinone oxidoreductase subunit I from Trichodesmium erythraeum (strain IMS101).